A 193-amino-acid chain; its full sequence is Sporulation-specific transcriptional regulator GerR (193 aa).

Residues 1–61 form the HTH myb-type domain; that stretch reads MTITRQDAWT…RWNSYVRKQY (61 aa). The segment at residues 35–57 is a DNA-binding region (H-T-H motif); sequence FEEVGRALTRTAAACGFRWNSYV. A coiled-coil region spans residues 122–177; the sequence is AQEFQLEREKLKEQIQSLQKELEDLRSENQTLRNQLEMTEEDYKALIDIMDRARKM.

The protein belongs to the RsfA transcriptional regulator family.

Its function is as follows. Transcriptional factor that regulates the expression of several late sporulation genes. Controls genes of both sigma-E and sigma-K regulons, acting alone on some genes and in conjunction with SpoIIID or GerE on others. Regulates, directly or indirectly, the expression of genes encoding coat proteins such as cgeA, cotB, cotC, cotG, cotU and cotY. Controls late sporulation genes in two ways: directly, by binding to the promoter region of genes such as cotB, cotU and spoVIF, and acting directly on their transcription, and indirectly, through the activation of SpoVIF, which stabilizes the transcriptional activator GerE and consequently induces the expression of the GerE-dependent genes, such as cotC and cotG. Its effect is strongly positive on spoVIF, cotC, and cotG, weakly positive on cotB, and negative on cotU. The polypeptide is Sporulation-specific transcriptional regulator GerR (Bacillus subtilis (strain 168)).